The primary structure comprises 465 residues: Ribulose bisphosphate carboxylase large chain (465 aa).

N6,N6,N6-trimethyllysine is present on lysine 4. The substrate site is built by asparagine 113 and threonine 163. Lysine 165 acts as the Proton acceptor in catalysis. Lysine 167 provides a ligand contact to substrate. Mg(2+) is bound by residues lysine 191, aspartate 193, and glutamate 194. Lysine 191 carries the N6-carboxylysine modification. Catalysis depends on histidine 284, which acts as the Proton acceptor. Substrate-binding residues include arginine 285, histidine 317, and serine 369.

This sequence belongs to the RuBisCO large chain family. Type I subfamily. Heterohexadecamer of 8 large chains and 8 small chains; disulfide-linked. The disulfide link is formed within the large subunit homodimers. It depends on Mg(2+) as a cofactor. Post-translationally, the disulfide bond which can form in the large chain dimeric partners within the hexadecamer appears to be associated with oxidative stress and protein turnover.

It is found in the plastid. The protein resides in the chloroplast. The catalysed reaction is 2 (2R)-3-phosphoglycerate + 2 H(+) = D-ribulose 1,5-bisphosphate + CO2 + H2O. It catalyses the reaction D-ribulose 1,5-bisphosphate + O2 = 2-phosphoglycolate + (2R)-3-phosphoglycerate + 2 H(+). RuBisCO catalyzes two reactions: the carboxylation of D-ribulose 1,5-bisphosphate, the primary event in carbon dioxide fixation, as well as the oxidative fragmentation of the pentose substrate in the photorespiration process. Both reactions occur simultaneously and in competition at the same active site. The polypeptide is Ribulose bisphosphate carboxylase large chain (Clitoria ternatea (Butterfly pea)).